The primary structure comprises 242 residues: 3-deoxy-manno-octulosonate cytidylyltransferase (242 aa).

This sequence belongs to the KdsB family.

The protein localises to the cytoplasm. The enzyme catalyses 3-deoxy-alpha-D-manno-oct-2-ulosonate + CTP = CMP-3-deoxy-beta-D-manno-octulosonate + diphosphate. It participates in nucleotide-sugar biosynthesis; CMP-3-deoxy-D-manno-octulosonate biosynthesis; CMP-3-deoxy-D-manno-octulosonate from 3-deoxy-D-manno-octulosonate and CTP: step 1/1. It functions in the pathway bacterial outer membrane biogenesis; lipopolysaccharide biosynthesis. Functionally, activates KDO (a required 8-carbon sugar) for incorporation into bacterial lipopolysaccharide in Gram-negative bacteria. The polypeptide is 3-deoxy-manno-octulosonate cytidylyltransferase (Anaeromyxobacter sp. (strain K)).